The sequence spans 606 residues: Aspartate--tRNA(Asp/Asn) ligase (606 aa).

Glutamate 172 serves as a coordination point for L-aspartate. The interval 196-199 is aspartate; that stretch reads QLFK. Position 218 (arginine 218) interacts with L-aspartate. ATP-binding positions include 218–220 and glutamine 227; that span reads RDE. Histidine 448 is a binding site for L-aspartate. Glutamate 482 contributes to the ATP binding site. Residue arginine 489 participates in L-aspartate binding. Residue 534–537 coordinates ATP; it reads GWDR.

This sequence belongs to the class-II aminoacyl-tRNA synthetase family. Type 1 subfamily. As to quaternary structure, homodimer.

It is found in the cytoplasm. It catalyses the reaction tRNA(Asx) + L-aspartate + ATP = L-aspartyl-tRNA(Asx) + AMP + diphosphate. In terms of biological role, aspartyl-tRNA synthetase with relaxed tRNA specificity since it is able to aspartylate not only its cognate tRNA(Asp) but also tRNA(Asn). Reaction proceeds in two steps: L-aspartate is first activated by ATP to form Asp-AMP and then transferred to the acceptor end of tRNA(Asp/Asn). In Saccharopolyspora erythraea (strain ATCC 11635 / DSM 40517 / JCM 4748 / NBRC 13426 / NCIMB 8594 / NRRL 2338), this protein is Aspartate--tRNA(Asp/Asn) ligase.